Consider the following 637-residue polypeptide: tRNA uridine 5-carboxymethylaminomethyl modification enzyme MnmG (637 aa).

FAD-binding positions include 15-20 (GAGHAG), Ile127, and Ser182. Residue 276-290 (GPRYCPSIEDKIVRF) participates in NAD(+) binding. Gln373 provides a ligand contact to FAD.

Belongs to the MnmG family. Homodimer. Heterotetramer of two MnmE and two MnmG subunits. FAD serves as cofactor.

It localises to the cytoplasm. Functionally, NAD-binding protein involved in the addition of a carboxymethylaminomethyl (cmnm) group at the wobble position (U34) of certain tRNAs, forming tRNA-cmnm(5)s(2)U34. The protein is tRNA uridine 5-carboxymethylaminomethyl modification enzyme MnmG of Streptococcus pneumoniae serotype 4 (strain ATCC BAA-334 / TIGR4).